The primary structure comprises 312 residues: Large ribosomal subunit protein uL10 (312 aa).

Residues 287–312 (AAAAPAAKKEEPKEESDDDMGFGLFD) form a disordered region.

This sequence belongs to the universal ribosomal protein uL10 family. P0 forms a pentameric complex by interaction with dimers of P1 and P2. Post-translationally, phosphorylated.

Ribosomal protein P0 is the functional equivalent of E.coli protein L10. The polypeptide is Large ribosomal subunit protein uL10 (Caenorhabditis elegans).